A 641-amino-acid chain; its full sequence is Bifunctional protein glk (641 aa).

The interval 1-340 (MSTGAQTKAA…QLSNRTGGAS (340 aa)) is glucokinase. 23–28 (ADVGGT) lines the ATP pocket. The region spanning 341–417 (SAVFERIRQM…LKLATGLTGT (77 aa)) is the HTH rpiR-type domain. Positions 341–641 (SAVFERIRQM…SHGAAPAAKD (301 aa)) are putative HTH-type transcriptional regulator. A DNA-binding region (H-T-H motif) is located at residues 377–396 (IVNIARKADVSQPTVIRFCR). The region spanning 461 to 600 (AIDILNNARR…AVGVAIRRAA (140 aa)) is the SIS domain. Residues 576 to 596 (SMISRILHLVMIDILAVGVAI) form a helical membrane-spanning segment.

This sequence in the N-terminal section; belongs to the bacterial glucokinase family.

The protein localises to the membrane. The catalysed reaction is D-glucose + ATP = D-glucose 6-phosphate + ADP + H(+). The protein is Bifunctional protein glk (glk) of Burkholderia mallei (strain ATCC 23344).